A 429-amino-acid polypeptide reads, in one-letter code: MKKFDKSIAAFEEAQDLMPGGVNSPVRAFKSVGMNPLFMERGKGSKVYDIDGNEYIDYVLSWGPLIHGHANDRVVEALKSVAERGTSFGAPTEIENKLAKLVIERVPSIEIVRMVNSGTEATMSALRLARGYTGRNKILKFIGCYHGHGDSLLIKAGSGVATLGLPDSPGVPEGVAKNTITVAYNDLESVKYAFEQFGDDIACVIVEPVAGNMGVVPPQPGFLEGLREVTEQNGALLIFDEVMTGFRVAYNCGQGYYGVTPDLTCLGKVIGGGLPVGAYGGKAEIMRQVAPSGPIYQAGTLSGNPLAMAAGYETLVQLTPESYVEFERKAEMLEAGLRKAAEKHGIPHHINRAGSMIGIFFTDEPVINYDAAKSSNLEFFAAYYREMVEQGVFLPPSQFEGLFLSTAHSDADIEATIAAAEIAMSKLKA.

Position 268 is an N6-(pyridoxal phosphate)lysine (Lys-268).

The protein belongs to the class-III pyridoxal-phosphate-dependent aminotransferase family. HemL subfamily. As to quaternary structure, homodimer. Pyridoxal 5'-phosphate serves as cofactor.

The protein resides in the cytoplasm. The enzyme catalyses (S)-4-amino-5-oxopentanoate = 5-aminolevulinate. It participates in porphyrin-containing compound metabolism; protoporphyrin-IX biosynthesis; 5-aminolevulinate from L-glutamyl-tRNA(Glu): step 2/2. This is Glutamate-1-semialdehyde 2,1-aminomutase 2 from Bacillus cereus (strain B4264).